The chain runs to 331 residues: HTH-type transcriptional regulator GntR (331 aa).

The 55-residue stretch at proline 6 to asparagine 60 folds into the HTH lacI-type domain. The segment at residues leucine 8–arginine 27 is a DNA-binding region (H-T-H motif).

It functions in the pathway carbohydrate acid metabolism; D-gluconate degradation [regulation]. Negative regulator for the gluconate utilization system GNT-I, the gntUKR operon. The chain is HTH-type transcriptional regulator GntR (gntR) from Escherichia coli O6:H1 (strain CFT073 / ATCC 700928 / UPEC).